Consider the following 610-residue polypeptide: Elongation factor 4 (610 aa).

The tr-type G domain maps to 14-196 (NRIRNFSIIA…ALVANIPPPK (183 aa)). GTP-binding positions include 26-31 (DHGKST) and 143-146 (NKID).

It belongs to the TRAFAC class translation factor GTPase superfamily. Classic translation factor GTPase family. LepA subfamily.

Its subcellular location is the cell inner membrane. The enzyme catalyses GTP + H2O = GDP + phosphate + H(+). Required for accurate and efficient protein synthesis under certain stress conditions. May act as a fidelity factor of the translation reaction, by catalyzing a one-codon backward translocation of tRNAs on improperly translocated ribosomes. Back-translocation proceeds from a post-translocation (POST) complex to a pre-translocation (PRE) complex, thus giving elongation factor G a second chance to translocate the tRNAs correctly. Binds to ribosomes in a GTP-dependent manner. The polypeptide is Elongation factor 4 (Legionella pneumophila (strain Paris)).